A 192-amino-acid polypeptide reads, in one-letter code: Cytochrome b-245 light chain (192 aa).

Topologically, residues 2–7 (GQIEWA) are cytoplasmic. A helical membrane pass occupies residues 8-30 (MWANEQALASGLILMTGGIVATA). Over 31–35 (GQFTQ) the chain is Extracellular. The helical transmembrane segment at 36-53 (WYLGTYSIAAGVLVCLLE) threads the bilayer. Topologically, residues 54 to 69 (YPRGRRTKGSTMERCE) are cytoplasmic. The stretch at 70–80 (QKYMTKVVKAF) is an intramembrane region. Residues 81–86 (GPLSRN) are Cytoplasmic-facing. A helical transmembrane segment spans residues 87–104 (YYIRAFLHLGLSVPAGFL). Residue L105 is a topological domain, extracellular. The chain crosses the membrane as a helical span at residues 106-126 (ATILGTACLAIASGIYLLAAI). Over 127-192 (RGEQWTPIEP…TPCPVTDEVV (66 aa)) the chain is Cytoplasmic. The tract at residues 134–192 (IEPKPKERPQVGGTIKQPPSNPPPRPPPEARKKPGEEAVAGVPRGAPRKTPCPVTDEVV) is disordered. A Phosphothreonine modification is found at T147. K149 is covalently cross-linked (Glycyl lysine isopeptide (Lys-Gly) (interchain with G-Cter in ubiquitin)).

Belongs to the p22phox family. As to quaternary structure, component of the phagocyte NADPH oxidase core complex/cytochrome b558 complex, composed of CYBB (heavy chain (beta)) and CYBA (light chain (alpha)). Component of the phagocyte NADPH oxidase complex composed of an obligatory core heterodimer formed by the membrane proteins CYBA and CYBB and the cytosolic regulatory subunits NCF1/p47-phox, NCF2/p67-phox, NCF4/p40-phox and the small GTPase RAC1 or RAC2. Interacts with NCF1 (via SH3 domain). Interacts with SH3PXD2A. Interacts with DUOX1, DUOX2 and TPO. Interacts with NOX4; this interaction mediates superoxide generation. Interacts with calprotectin (S100A8/9). Interacts with GBP7. Interacts with NOXO1. Forms a heterodimer with NOX3 and is essential for activity and cell membrane localization of NOX3. Interacts with NOX1. In terms of processing, phosphorylation at Thr-147 enhances NADPH oxidase activity by promoting NCF1/p47-phox binding. Ubiquitinated at Lys-149 likely by RNF145.

It localises to the cell membrane. Its function is as follows. Subunit of NADPH oxidase complexes that is required for the NADPH oxidase activity that generates, in various cell types, superoxide from molecular oxygen utilizing NADPH as an electron donor. Subunit of the phagocyte NADPH oxidase complex that mediates the transfer of electrons from cytosolic NADPH to O2 to produce the superoxide anion (O2(-)). In the activated complex, electrons are first transferred from NADPH to flavin adenine dinucleotide (FAD) and subsequently transferred via two heme molecules to molecular oxygen, producing superoxide through an outer-sphere reaction. Activation of the NADPH oxidase complex is initiated by the assembly of cytosolic subunits of the NADPH oxidase complex with the core NADPH oxidase complex to form a complex at the plasma membrane or phagosomal membrane. This activation process is initiated by phosphorylation dependent binding of the cytosolic NCF1/p47-phox subunit to the C-terminus of CYBA/p22-phox. Aassociates with NOX3 to form a functional NADPH oxidase constitutively generating superoxide. This chain is Cytochrome b-245 light chain, found in Sus scrofa (Pig).